A 489-amino-acid polypeptide reads, in one-letter code: Rhamnulokinase (489 aa).

Alanine 13–arginine 17 is an ATP binding site. Residues cysteine 68 and cysteine 222 are joined by a disulfide bond. Substrate-binding positions include glycine 83 and histidine 236 to threonine 238. Aspartate 237 acts as the Proton acceptor in catalysis. Threonine 259 contributes to the ATP binding site. Asparagine 296 provides a ligand contact to substrate. Glutamine 304 is a binding site for ATP. The cysteines at positions 353 and 370 are disulfide-linked. Glycine 402 serves as a coordination point for ATP. A disulfide bridge links cysteine 413 with cysteine 417.

Belongs to the rhamnulokinase family. It depends on Mg(2+) as a cofactor.

It carries out the reaction L-rhamnulose + ATP = L-rhamnulose 1-phosphate + ADP + H(+). Its pathway is carbohydrate degradation; L-rhamnose degradation; glycerone phosphate from L-rhamnose: step 2/3. In terms of biological role, involved in the catabolism of L-rhamnose (6-deoxy-L-mannose). Catalyzes the transfer of the gamma-phosphate group from ATP to the 1-hydroxyl group of L-rhamnulose to yield L-rhamnulose 1-phosphate. In Shigella flexneri serotype 5b (strain 8401), this protein is Rhamnulokinase.